A 128-amino-acid chain; its full sequence is MTRIKRGYIARRRRTKMRLFASSFRGAHSRLTRTITQQKIRALFSAHRDRDKQKINFRRLWIARINAVIRKRGVSYSYSKLIHDLYKRQLLLNRKILAQIAISNRNCLYMISNEIIKETERKEYTGII.

This sequence belongs to the bacterial ribosomal protein bL20 family.

The protein localises to the plastid. Binds directly to 23S ribosomal RNA and is necessary for the in vitro assembly process of the 50S ribosomal subunit. It is not involved in the protein synthesizing functions of that subunit. The protein is Large ribosomal subunit protein bL20c (rpl20) of Lathraea clandestina (Purple toothwort).